Reading from the N-terminus, the 264-residue chain is Ion-translocating oxidoreductase complex subunit B (264 aa).

Residues 5–25 (LINSIAVLAGLGFAVGVMLVI) traverse the membrane as a helical segment. The region spanning 33 to 92 (DSNPLIDDVASLLPGANCGGCGFAGCAACAEAIVEQGAPVNSCPVGGFEVAKQIGALLGQ) is the 4Fe-4S domain. Residues Cys50, Cys53, Cys58, Cys75, Cys138, Cys142, Cys148, Cys152, Cys172, Cys175, Cys178, Cys182, Cys217, Cys220, Cys223, Cys227, Cys246, Cys249, Cys252, and Cys256 each coordinate [4Fe-4S] cluster. 4Fe-4S ferredoxin-type domains follow at residues 127–162 (VALM…MGED), 163–192 (GFPV…FARD), 207–236 (KDVK…RVTE), and 237–264 (FLAE…IELR).

The protein belongs to the 4Fe4S bacterial-type ferredoxin family. RnfB subfamily. In terms of assembly, the Rnf complex is probably composed of eight subunits, including RnfA, RnfB, RnfC, RnfD, RnfE and RnfG. The cofactor is [4Fe-4S] cluster.

Its subcellular location is the cell membrane. Functionally, part of a membrane-bound complex that couples electron transfer with translocation of ions across the membrane. Catalyzes Na(+) transport, most probably coupled to electron transfer from reduced ferredoxin to methanophenazine and heterodisulfide reductase. Involved in heterodisulfide reduction during methanogenesis from acetate. In Methanosarcina acetivorans (strain ATCC 35395 / DSM 2834 / JCM 12185 / C2A), this protein is Ion-translocating oxidoreductase complex subunit B.